Here is a 259-residue protein sequence, read N- to C-terminus: Phosphate import ATP-binding protein PstB (259 aa).

Residues 2–248 (GQRIDVNHEN…ITMFNNPQNE (247 aa)) enclose the ABC transporter domain. 37–44 (GPSGCGKS) serves as a coordination point for ATP.

This sequence belongs to the ABC transporter superfamily. Phosphate importer (TC 3.A.1.7) family. The complex is composed of two ATP-binding proteins (PstB), two transmembrane proteins (PstC and PstA) and a solute-binding protein (PstS).

The protein localises to the cell membrane. It catalyses the reaction phosphate(out) + ATP + H2O = ADP + 2 phosphate(in) + H(+). Functionally, part of the ABC transporter complex PstSACB involved in phosphate import. Responsible for energy coupling to the transport system. This is Phosphate import ATP-binding protein PstB from Bifidobacterium longum (strain NCC 2705).